Consider the following 447-residue polypeptide: Na(+)-translocating NADH-quinone reductase subunit A (447 aa).

Belongs to the NqrA family. As to quaternary structure, composed of six subunits; NqrA, NqrB, NqrC, NqrD, NqrE and NqrF.

It catalyses the reaction a ubiquinone + n Na(+)(in) + NADH + H(+) = a ubiquinol + n Na(+)(out) + NAD(+). Its function is as follows. NQR complex catalyzes the reduction of ubiquinone-1 to ubiquinol by two successive reactions, coupled with the transport of Na(+) ions from the cytoplasm to the periplasm. NqrA to NqrE are probably involved in the second step, the conversion of ubisemiquinone to ubiquinol. The polypeptide is Na(+)-translocating NADH-quinone reductase subunit A (Yersinia pseudotuberculosis serotype O:1b (strain IP 31758)).